Reading from the N-terminus, the 306-residue chain is Phosphatidate cytidylyltransferase (306 aa).

The tract at residues 1–28 is disordered; it reads MTTNDAGTGNPAEQPARGAKQQPATETS. The next 8 membrane-spanning stretches (helical) occupy residues 36–56, 82–102, 103–123, 151–171, 180–200, 218–238, 241–261, and 285–305; these read AAIV…VFVP, GYLI…WLTW, PFGA…CMIW, ATVF…MLVY, FCMM…GVLF, FAGS…FLVG, PWIG…GDLV, and MDRL…LTLL.

Belongs to the CDS family.

The protein resides in the cell membrane. It catalyses the reaction a 1,2-diacyl-sn-glycero-3-phosphate + CTP + H(+) = a CDP-1,2-diacyl-sn-glycerol + diphosphate. It functions in the pathway phospholipid metabolism; CDP-diacylglycerol biosynthesis; CDP-diacylglycerol from sn-glycerol 3-phosphate: step 3/3. The sequence is that of Phosphatidate cytidylyltransferase (cdsA) from Mycobacterium bovis (strain ATCC BAA-935 / AF2122/97).